Consider the following 469-residue polypeptide: Glutamate--tRNA ligase (469 aa).

Residues 11–21 carry the 'HIGH' region motif; sequence PSPTGFIHLGN. Residues 116–131 are compositionally biased toward basic and acidic residues; the sequence is ASGEKPRYDGTWRPEP. The interval 116 to 139 is disordered; it reads ASGEKPRYDGTWRPEPGKVLPTPP. Residues 243 to 247 carry the 'KMSKS' region motif; the sequence is KMSKR. Lys246 is a binding site for ATP.

This sequence belongs to the class-I aminoacyl-tRNA synthetase family. Glutamate--tRNA ligase type 1 subfamily. As to quaternary structure, monomer.

It is found in the cytoplasm. It carries out the reaction tRNA(Glu) + L-glutamate + ATP = L-glutamyl-tRNA(Glu) + AMP + diphosphate. In terms of biological role, catalyzes the attachment of glutamate to tRNA(Glu) in a two-step reaction: glutamate is first activated by ATP to form Glu-AMP and then transferred to the acceptor end of tRNA(Glu). In Paraburkholderia phymatum (strain DSM 17167 / CIP 108236 / LMG 21445 / STM815) (Burkholderia phymatum), this protein is Glutamate--tRNA ligase.